We begin with the raw amino-acid sequence, 485 residues long: Putative phosphoethanolamine transferase HI_1064 (485 aa).

Transmembrane regions (helical) follow at residues 33–53 (ILPA…ILIG), 55–75 (GMFT…ILLL), 81–101 (SFYF…PTGL), and 125–145 (FLLQ…ILIF).

Belongs to the phosphoethanolamine transferase family.

It localises to the cell membrane. The polypeptide is Putative phosphoethanolamine transferase HI_1064 (Haemophilus influenzae (strain ATCC 51907 / DSM 11121 / KW20 / Rd)).